A 538-amino-acid polypeptide reads, in one-letter code: Efflux pump radE (538 aa).

Basic and acidic residues-rich tracts occupy residues 1–12, 20–35, and 65–74; these read MATSRDFGREPP, EAGHTLHDGCQHVSEH, and DPKEEERDPN. Disordered stretches follow at residues 1–35 and 65–90; these read MATSRDFGREPPRQQQDSDEAGHTLHDGCQHVSEH and DPKEEERDPNIVDWDGPDDPANPQNW. 12 helical membrane passes run 100-120, 134-154, 163-183, 194-214, 225-245, 253-273, 327-347, 362-382, 409-429, 436-456, 482-502, and 505-525; these read AVLSIITFMVPLASSMFAPGI, LATFVVSVYILGLAAGPLVLA, VVIYHVGNVLFIIFTVACALS, FLCGLVGAGPIAIGGGTIADL, SVWSLGPLLGPSVGPVAGGFL, WIFWVLAITAGVITIAGLLVL, PICLVLSVYSAFVYAMIYFMI, EGIVGLVYIALGLGMLFGVVV, IPPTLLAGFLIPTGLFIYGWT, WAVPLLGALLAGMGICIINIS, IFGATFPLFALQMYETLGLGW, and SLLAFIAVAMFAIPPLLFYYG.

This sequence belongs to the major facilitator superfamily.

The protein localises to the cell membrane. Functionally, efflux pump that might be required for efficient secretion of radicicol or other secondary metabolies produced by the radicicol gene cluster. The chain is Efflux pump radE from Floropilus chiversii (Chaetomium chiversii).